The primary structure comprises 165 residues: Ribosome maturation factor RimM (165 aa).

The PRC barrel domain occupies 94 to 165; that stretch reads EDEFYIADLN…YGILNYKREV (72 aa).

The protein belongs to the RimM family. Binds ribosomal protein uS19.

It is found in the cytoplasm. Functionally, an accessory protein needed during the final step in the assembly of 30S ribosomal subunit, possibly for assembly of the head region. Essential for efficient processing of 16S rRNA. May be needed both before and after RbfA during the maturation of 16S rRNA. It has affinity for free ribosomal 30S subunits but not for 70S ribosomes. The chain is Ribosome maturation factor RimM from Rickettsia canadensis (strain McKiel).